We begin with the raw amino-acid sequence, 347 residues long: Tryptophan--tRNA ligase (347 aa).

ATP is bound by residues 10–12 (QAS) and 18–19 (GN). Positions 11–19 (ASGRQHLGN) match the 'HIGH' region motif. Asp-140 serves as a coordination point for L-tryptophan. ATP is bound by residues 152–154 (GND), Ile-191, and 200–204 (KMSKS). Residues 200 to 204 (KMSKS) carry the 'KMSKS' region motif.

It belongs to the class-I aminoacyl-tRNA synthetase family. Homodimer.

Its subcellular location is the cytoplasm. It carries out the reaction tRNA(Trp) + L-tryptophan + ATP = L-tryptophyl-tRNA(Trp) + AMP + diphosphate + H(+). In terms of biological role, catalyzes the attachment of tryptophan to tRNA(Trp). The protein is Tryptophan--tRNA ligase of Mycoplasma genitalium (strain ATCC 33530 / DSM 19775 / NCTC 10195 / G37) (Mycoplasmoides genitalium).